Here is a 221-residue protein sequence, read N- to C-terminus: 7-cyano-7-deazaguanine synthase (221 aa).

ATP is bound at residue 8–18 (MSGGMDSTLCA). Zn(2+) contacts are provided by Cys-187, Cys-195, Cys-198, and Cys-201.

It belongs to the QueC family. Zn(2+) is required as a cofactor.

The enzyme catalyses 7-carboxy-7-deazaguanine + NH4(+) + ATP = 7-cyano-7-deazaguanine + ADP + phosphate + H2O + H(+). Its pathway is purine metabolism; 7-cyano-7-deazaguanine biosynthesis. Its function is as follows. Catalyzes the ATP-dependent conversion of 7-carboxy-7-deazaguanine (CDG) to 7-cyano-7-deazaguanine (preQ(0)). The polypeptide is 7-cyano-7-deazaguanine synthase (Campylobacter concisus (strain 13826)).